A 290-amino-acid polypeptide reads, in one-letter code: Protein SSO1 (290 aa).

At methionine 1–arginine 265 the chain is on the cytoplasmic side. The t-SNARE coiled-coil homology domain maps to leucine 190 to alanine 252. A helical; Anchor for type IV membrane protein transmembrane segment spans residues cysteine 266 to valine 287. Topologically, residues lysine 288 to arginine 290 are extracellular.

This sequence belongs to the syntaxin family.

The protein resides in the membrane. Functionally, required for vesicle fusion with the plasma membrane. The polypeptide is Protein SSO1 (SSO1) (Saccharomyces cerevisiae (strain ATCC 204508 / S288c) (Baker's yeast)).